Here is a 361-residue protein sequence, read N- to C-terminus: Peptide chain release factor 1 (361 aa).

Q237 carries the post-translational modification N5-methylglutamine.

Belongs to the prokaryotic/mitochondrial release factor family. In terms of processing, methylated by PrmC. Methylation increases the termination efficiency of RF1.

Its subcellular location is the cytoplasm. Its function is as follows. Peptide chain release factor 1 directs the termination of translation in response to the peptide chain termination codons UAG and UAA. In Alcanivorax borkumensis (strain ATCC 700651 / DSM 11573 / NCIMB 13689 / SK2), this protein is Peptide chain release factor 1.